A 252-amino-acid chain; its full sequence is Imidazole glycerol phosphate synthase subunit HisF (252 aa).

Active-site residues include Asp-13 and Asp-132.

Belongs to the HisA/HisF family. In terms of assembly, heterodimer of HisH and HisF.

It is found in the cytoplasm. The catalysed reaction is 5-[(5-phospho-1-deoxy-D-ribulos-1-ylimino)methylamino]-1-(5-phospho-beta-D-ribosyl)imidazole-4-carboxamide + L-glutamine = D-erythro-1-(imidazol-4-yl)glycerol 3-phosphate + 5-amino-1-(5-phospho-beta-D-ribosyl)imidazole-4-carboxamide + L-glutamate + H(+). The protein operates within amino-acid biosynthesis; L-histidine biosynthesis; L-histidine from 5-phospho-alpha-D-ribose 1-diphosphate: step 5/9. Its function is as follows. IGPS catalyzes the conversion of PRFAR and glutamine to IGP, AICAR and glutamate. The HisF subunit catalyzes the cyclization activity that produces IGP and AICAR from PRFAR using the ammonia provided by the HisH subunit. This is Imidazole glycerol phosphate synthase subunit HisF from Campylobacter fetus subsp. fetus (strain 82-40).